The sequence spans 395 residues: General transcription factor IIH subunit 2-like protein (395 aa).

The region spanning 60-236 is the VWFA domain; sequence HLYVVVDGSR…HYKELLTHHL (177 aa). At tyrosine 95 the chain carries Phosphotyrosine. Residues 291–308 form a C4-type zinc finger; sequence CPQCRAKYCELPVECKIC.

The protein belongs to the GTF2H2 family.

The protein localises to the nucleus. Functionally, component of the core-TFIIH basal transcription factor involved in nucleotide excision repair (NER) of DNA and, when complexed to CAK, in RNA transcription by RNA polymerase II. The polypeptide is General transcription factor IIH subunit 2-like protein (GTF2H2C) (Homo sapiens (Human)).